Here is a 279-residue protein sequence, read N- to C-terminus: Indole-3-glycerol phosphate synthase (279 aa).

The protein belongs to the TrpC family.

It catalyses the reaction 1-(2-carboxyphenylamino)-1-deoxy-D-ribulose 5-phosphate + H(+) = (1S,2R)-1-C-(indol-3-yl)glycerol 3-phosphate + CO2 + H2O. It participates in amino-acid biosynthesis; L-tryptophan biosynthesis; L-tryptophan from chorismate: step 4/5. This Ectopseudomonas mendocina (strain ymp) (Pseudomonas mendocina) protein is Indole-3-glycerol phosphate synthase.